The following is a 133-amino-acid chain: p53 and DNA damage-regulated protein 1 (133 aa).

This sequence belongs to the prefoldin subunit beta family. In terms of assembly, component of the PAQosome complex which is responsible for the biogenesis of several protein complexes and which consists of R2TP complex members RUVBL1, RUVBL2, RPAP3 and PIH1D1, URI complex members PFDN2, PFDN6, PDRG1, UXT and URI1 as well as ASDURF, POLR2E and DNAAF10/WDR92.

It is found in the cytoplasm. In terms of biological role, may play a role in chaperone-mediated protein folding. The sequence is that of p53 and DNA damage-regulated protein 1 (PDRG1) from Bos taurus (Bovine).